The chain runs to 436 residues: UBX domain-containing protein 7 (436 aa).

A Glycyl lysine isopeptide (Lys-Gly) (interchain with G-Cter in ubiquitin) cross-link involves residue Lys-19. The tract at residues 115-141 is disordered; that stretch reads AGESSSRETNPGLAREEKSSRDVHRKN. The UBX domain occupies 212–290; that stretch reads LHSSKCVLQI…ELTPRSALLL (79 aa). A compositionally biased stretch (basic and acidic residues) spans 325–346; that stretch reads DKDPEVTSQREETSKPNRHEVR. 2 disordered regions span residues 325-357 and 371-436; these read DKDP…AASS and SSAH…EDKK. Residues 347–357 show a composition bias toward low complexity; it reads SSTPLSGAASS. The segment covering 371 to 408 has biased composition (polar residues); it reads SSAHASPMLTPSGTRYPSETNLTTSRSVSPNVFQFVNN. Ser-388 carries the phosphoserine modification. Positions 426-436 are enriched in basic and acidic residues; sequence HLEKKKDEDKK.

As to quaternary structure, interacts with CDC48.

The protein resides in the endoplasmic reticulum. Its function is as follows. Involved in CDC48-dependent protein degradation through the ubiquitin/proteasome pathway. This Saccharomyces cerevisiae (strain ATCC 204508 / S288c) (Baker's yeast) protein is UBX domain-containing protein 7 (UBX7).